The chain runs to 336 residues: tRNA-cytidine(32) 2-sulfurtransferase (336 aa).

Residues 1–42 are disordered; it reads MNAPDTLTGLEANAPVTEEAPAASEAERKRAHTRREQKEQYE. The PP-loop motif signature appears at 75–80; sequence SGGKDS. [4Fe-4S] cluster contacts are provided by cysteine 150, cysteine 153, and cysteine 241. The disordered stretch occupies residues 301–328; the sequence is PHGDIAFDEEPCSADSASNQTQRPSQTV. The segment covering 315-328 has biased composition (polar residues); it reads DSASNQTQRPSQTV.

This sequence belongs to the TtcA family. As to quaternary structure, homodimer. It depends on Mg(2+) as a cofactor. Requires [4Fe-4S] cluster as cofactor.

Its subcellular location is the cytoplasm. The catalysed reaction is cytidine(32) in tRNA + S-sulfanyl-L-cysteinyl-[cysteine desulfurase] + AH2 + ATP = 2-thiocytidine(32) in tRNA + L-cysteinyl-[cysteine desulfurase] + A + AMP + diphosphate + H(+). It participates in tRNA modification. Catalyzes the ATP-dependent 2-thiolation of cytidine in position 32 of tRNA, to form 2-thiocytidine (s(2)C32). The sulfur atoms are provided by the cysteine/cysteine desulfurase (IscS) system. This is tRNA-cytidine(32) 2-sulfurtransferase from Paraburkholderia phymatum (strain DSM 17167 / CIP 108236 / LMG 21445 / STM815) (Burkholderia phymatum).